The chain runs to 187 residues: Orotate phosphoribosyltransferase (187 aa).

5-phospho-alpha-D-ribose 1-diphosphate is bound by residues arginine 98, lysine 99, lysine 102, histidine 104, and 128–136; that span reads EDVTTTGGS. Threonine 132 and arginine 160 together coordinate orotate.

It belongs to the purine/pyrimidine phosphoribosyltransferase family. PyrE subfamily. Homodimer. Mg(2+) is required as a cofactor.

It carries out the reaction orotidine 5'-phosphate + diphosphate = orotate + 5-phospho-alpha-D-ribose 1-diphosphate. It functions in the pathway pyrimidine metabolism; UMP biosynthesis via de novo pathway; UMP from orotate: step 1/2. Catalyzes the transfer of a ribosyl phosphate group from 5-phosphoribose 1-diphosphate to orotate, leading to the formation of orotidine monophosphate (OMP). The chain is Orotate phosphoribosyltransferase from Rhodopseudomonas palustris (strain ATCC BAA-98 / CGA009).